The primary structure comprises 59 residues: Large ribosomal subunit protein bL32 (59 aa).

The disordered stretch occupies residues 1 to 59; it reads MAVQQNKKSPSKRGMHRSHDHLSVAPLAVEPTTGETHLRHHVSPNGYYRGRKVIKTKND. Basic residues-rich tracts occupy residues 9 to 19 and 49 to 59; these read SPSKRGMHRSH and RGRKVIKTKND.

The protein belongs to the bacterial ribosomal protein bL32 family.

This Cupriavidus metallidurans (strain ATCC 43123 / DSM 2839 / NBRC 102507 / CH34) (Ralstonia metallidurans) protein is Large ribosomal subunit protein bL32.